Consider the following 237-residue polypeptide: tRNA1(Val) (adenine(37)-N6)-methyltransferase (237 aa).

It belongs to the methyltransferase superfamily. tRNA (adenine-N(6)-)-methyltransferase family.

The protein resides in the cytoplasm. It carries out the reaction adenosine(37) in tRNA1(Val) + S-adenosyl-L-methionine = N(6)-methyladenosine(37) in tRNA1(Val) + S-adenosyl-L-homocysteine + H(+). Its function is as follows. Specifically methylates the adenine in position 37 of tRNA(1)(Val) (anticodon cmo5UAC). This chain is tRNA1(Val) (adenine(37)-N6)-methyltransferase, found in Pasteurella multocida (strain Pm70).